The sequence spans 932 residues: Isoleucine--tRNA ligase (932 aa).

The 'HIGH' region signature appears at 57 to 67 (PYANGDIHMGH). Residue Glu556 coordinates L-isoleucyl-5'-AMP. The 'KMSKS' region motif lies at 597 to 601 (KMSKS). Position 600 (Lys600) interacts with ATP. Residues Cys891, Cys894, Cys911, and Cys914 each contribute to the Zn(2+) site.

The protein belongs to the class-I aminoacyl-tRNA synthetase family. IleS type 1 subfamily. As to quaternary structure, monomer. Zn(2+) serves as cofactor.

It localises to the cytoplasm. It carries out the reaction tRNA(Ile) + L-isoleucine + ATP = L-isoleucyl-tRNA(Ile) + AMP + diphosphate. Its function is as follows. Catalyzes the attachment of isoleucine to tRNA(Ile). As IleRS can inadvertently accommodate and process structurally similar amino acids such as valine, to avoid such errors it has two additional distinct tRNA(Ile)-dependent editing activities. One activity is designated as 'pretransfer' editing and involves the hydrolysis of activated Val-AMP. The other activity is designated 'posttransfer' editing and involves deacylation of mischarged Val-tRNA(Ile). In Lactiplantibacillus plantarum (strain ATCC BAA-793 / NCIMB 8826 / WCFS1) (Lactobacillus plantarum), this protein is Isoleucine--tRNA ligase.